We begin with the raw amino-acid sequence, 191 residues long: Pyridoxal 5'-phosphate synthase subunit PdxT (191 aa).

52 to 54 (GES) lines the L-glutamine pocket. Cys-81 functions as the Nucleophile in the catalytic mechanism. L-glutamine is bound by residues Arg-108 and 136–137 (IR). Active-site charge relay system residues include His-172 and Glu-174.

This sequence belongs to the glutaminase PdxT/SNO family. As to quaternary structure, in the presence of PdxS, forms a dodecamer of heterodimers. Only shows activity in the heterodimer.

The catalysed reaction is aldehydo-D-ribose 5-phosphate + D-glyceraldehyde 3-phosphate + L-glutamine = pyridoxal 5'-phosphate + L-glutamate + phosphate + 3 H2O + H(+). The enzyme catalyses L-glutamine + H2O = L-glutamate + NH4(+). The protein operates within cofactor biosynthesis; pyridoxal 5'-phosphate biosynthesis. Its function is as follows. Catalyzes the hydrolysis of glutamine to glutamate and ammonia as part of the biosynthesis of pyridoxal 5'-phosphate. The resulting ammonia molecule is channeled to the active site of PdxS. This Actinobacillus pleuropneumoniae serotype 7 (strain AP76) protein is Pyridoxal 5'-phosphate synthase subunit PdxT.